A 341-amino-acid chain; its full sequence is Glycerol-3-phosphate dehydrogenase [NAD(P)+] (341 aa).

3 residues coordinate NADPH: Ser-13, Trp-14, and Lys-108. Positions 108, 139, and 141 each coordinate sn-glycerol 3-phosphate. Ala-143 serves as a coordination point for NADPH. Positions 194, 247, 257, 258, and 259 each coordinate sn-glycerol 3-phosphate. Catalysis depends on Lys-194, which acts as the Proton acceptor. Arg-258 serves as a coordination point for NADPH. 2 residues coordinate NADPH: Val-282 and Glu-284.

The protein belongs to the NAD-dependent glycerol-3-phosphate dehydrogenase family.

The protein localises to the cytoplasm. The catalysed reaction is sn-glycerol 3-phosphate + NAD(+) = dihydroxyacetone phosphate + NADH + H(+). It carries out the reaction sn-glycerol 3-phosphate + NADP(+) = dihydroxyacetone phosphate + NADPH + H(+). It participates in membrane lipid metabolism; glycerophospholipid metabolism. Functionally, catalyzes the reduction of the glycolytic intermediate dihydroxyacetone phosphate (DHAP) to sn-glycerol 3-phosphate (G3P), the key precursor for phospholipid synthesis. The chain is Glycerol-3-phosphate dehydrogenase [NAD(P)+] from Lactococcus lactis subsp. lactis (strain IL1403) (Streptococcus lactis).